The primary structure comprises 185 residues: uncharacterized protein (185 aa).

This is an uncharacterized protein from Methanocaldococcus jannaschii (strain ATCC 43067 / DSM 2661 / JAL-1 / JCM 10045 / NBRC 100440) (Methanococcus jannaschii).